The chain runs to 775 residues: Tumor necrosis factor alpha-induced protein 3 (775 aa).

Residue Ala2 is modified to N-acetylalanine. The tract at residues 58 to 300 (PQFREIIHKA…LTDPENEMKE (243 aa)) is TRAF-binding. Positions 92-263 (LVALKTNGDG…SQHFVPLVTL (172 aa)) constitute an OTU domain. Asp100 is an active-site residue. Residue Cys103 is the Nucleophile of the active site. 3 interaction with ubiquitin regions span residues 157-159 (LCY), 190-192 (SLE), and 224-227 (FAPL). His256 functions as the Proton acceptor in the catalytic mechanism. The tract at residues 369–775 (AQNPLEPSTP…ECYQFKQMYG (407 aa)) is interaction with TNIP1. The A20-type 1 zinc-finger motif lies at 381–416 (SLMDIKCETPNCPFFMSVNTQPLCHECSERRQKNQS). The segment at 386–445 (KCETPNCPFFMSVNTQPLCHECSERRQKNQSKLPKLNSKLGPEGLPGVGLGSSNWSPEET) is interaction with RIPK1. 4 residues coordinate Zn(2+): Cys387, Cys392, Cys404, and Cys407. The tract at residues 415 to 455 (QSKLPKLNSKLGPEGLPGVGLGSSNWSPEETAGGPHSAPPT) is disordered. Ser451 is modified (phosphoserine). 2 A20-type zinc fingers span residues 464–499 (ETTA…NASH) and 500–533 (TADP…AEPS). Zn(2+) contacts are provided by Cys470, Cys475, Cys487, Cys490, Cys506, Cys509, Cys521, and Cys524. Residues 567–580 (TGNVSPSGCLSQAA) show a composition bias toward polar residues. The interval 567 to 590 (TGNVSPSGCLSQAARTPGDRAGTS) is disordered. A20-type zinc fingers lie at residues 586–621 (RAGT…ENKQ), 636–671 (FQNN…NQRF), 695–730 (VASR…RVGS), and 741–775 (EPPK…QMYG). The segment at 590–640 (SKCRKAGCMYFGTPENKGFCTLCFIEYRENKQSVTASEKAGSPAPRFQNNV) is required for proteasomal degradation of UBE2N and UBE2D3, TRAF6 deubiquitination, and TAX1BP1 interaction with UBE2N. A sufficient for inhibitory activity of TNF-induced NF-kappa-B activity region spans residues 591–775 (KCRKAGCMYF…ECYQFKQMYG (185 aa)). The Zn(2+) site is built by Cys592, Cys597, Cys609, Cys612, Cys642, Cys647, Cys659, Cys662, Cys701, Cys706, Cys718, Cys721, Cys747, Cys752, Cys764, and Cys767. A required for lysosomal localization and for TRAF2 lysosomal degradation region spans residues 682 to 775 (RSSQHRDMPR…ECYQFKQMYG (94 aa)).

The protein belongs to the peptidase C64 family. As to quaternary structure, homodimer. Interacts with TNIP1, TAX1BP1 and TRAF2. Interacts with RNF11, ITCH and TAX1BP1 only after TNF stimulation; these interaction are transient and they are lost after 1 hour of stimulation with TNF. Interacts with YWHAZ and YWHAH. Interacts with IKBKG; the interaction is induced by TNF stimulation and by polyubiquitin. Interacts with RIPK1. Interacts with UBE2N; the interaction requires TAX1BP1. Interacts with TRAF6. In terms of tissue distribution, found in most tissues during development. Strikingly high levels are found in lymphoid organs, including the thymus, spleen, and gut-associated lymphoid tissue. Constitutively expressed in immature and mature thymocyte subpopulations as well as in resting peripheral T-cells; activation of these leads to down-regulation.

It localises to the cytoplasm. It is found in the nucleus. Its subcellular location is the lysosome. The catalysed reaction is Thiol-dependent hydrolysis of ester, thioester, amide, peptide and isopeptide bonds formed by the C-terminal Gly of ubiquitin (a 76-residue protein attached to proteins as an intracellular targeting signal).. Ubiquitin-editing enzyme that contains both ubiquitin ligase and deubiquitinase activities. Involved in immune and inflammatory responses signaled by cytokines, such as TNF-alpha and IL-1 beta, or pathogens via Toll-like receptors (TLRs) through terminating NF-kappa-B activity. Essential component of a ubiquitin-editing protein complex, comprising also RNF11, ITCH and TAX1BP1, that ensures the transient nature of inflammatory signaling pathways. In cooperation with TAX1BP1 promotes disassembly of E2-E3 ubiquitin protein ligase complexes in IL-1R and TNFR-1 pathways; affected are at least E3 ligases TRAF6, TRAF2 and BIRC2, and E2 ubiquitin-conjugating enzymes UBE2N and UBE2D3. In cooperation with TAX1BP1 promotes ubiquitination of UBE2N and proteasomal degradation of UBE2N and UBE2D3. Upon TNF stimulation, deubiquitinates 'Lys-63'-polyubiquitin chains on RIPK1 and catalyzes the formation of 'Lys-48'-polyubiquitin chains. This leads to RIPK1 proteasomal degradation and consequently termination of the TNF- or LPS-mediated activation of NF-kappa-B. Deubiquitinates TRAF6 probably acting on 'Lys-63'-linked polyubiquitin. Upon T-cell receptor (TCR)-mediated T-cell activation, deubiquitinates 'Lys-63'-polyubiquitin chains on MALT1 thereby mediating disassociation of the CBM (CARD11:BCL10:MALT1) and IKK complexes and preventing sustained IKK activation. Deubiquitinates NEMO/IKBKG; the function is facilitated by TNIP1 and leads to inhibition of NF-kappa-B activation. Upon stimulation by bacterial peptidoglycans, probably deubiquitinates RIPK2. Can also inhibit I-kappa-B-kinase (IKK) through a non-catalytic mechanism which involves polyubiquitin; polyubiquitin promotes association with IKBKG and prevents IKK MAP3K7-mediated phosphorylation. Targets TRAF2 for lysosomal degradation. In vitro able to deubiquitinate 'Lys-11'-, 'Lys-48'- and 'Lys-63' polyubiquitin chains. Inhibitor of programmed cell death. Has a role in the function of the lymphoid system. Required for LPS-induced production of pro-inflammatory cytokines and IFN beta in LPS-tolerized macrophages. In Mus musculus (Mouse), this protein is Tumor necrosis factor alpha-induced protein 3 (Tnfaip3).